A 344-amino-acid chain; its full sequence is Thiamine thiazole synthase (344 aa).

Substrate-binding positions include cysteine 90, 111–112, glycine 119, and valine 184; that span reads EA. Cysteine 232 carries the post-translational modification 2,3-didehydroalanine (Cys). Residues aspartate 234, histidine 249, methionine 301, and 311 to 313 each bind substrate; that span reads RMG.

This sequence belongs to the THI4 family. Homooctamer. Interacts with cyp-41. Requires Fe cation as cofactor. In terms of processing, during the catalytic reaction, a sulfide is transferred from Cys-232 to a reaction intermediate, generating a dehydroalanine residue.

Its subcellular location is the cytoplasm. It localises to the nucleus. It carries out the reaction [ADP-thiazole synthase]-L-cysteine + glycine + NAD(+) = [ADP-thiazole synthase]-dehydroalanine + ADP-5-ethyl-4-methylthiazole-2-carboxylate + nicotinamide + 3 H2O + 2 H(+). Its function is as follows. Involved in biosynthesis of the thiamine precursor thiazole. Catalyzes the conversion of NAD and glycine to adenosine diphosphate 5-(2-hydroxyethyl)-4-methylthiazole-2-carboxylic acid (ADT), an adenylated thiazole intermediate. The reaction includes an iron-dependent sulfide transfer from a conserved cysteine residue of the protein to a thiazole intermediate. The enzyme can only undergo a single turnover, which suggests it is a suicide enzyme. May have additional roles in adaptation to various stress conditions and in DNA damage tolerance. This chain is Thiamine thiazole synthase, found in Neurospora crassa (strain ATCC 24698 / 74-OR23-1A / CBS 708.71 / DSM 1257 / FGSC 987).